Consider the following 312-residue polypeptide: Protein-methionine-sulfoxide reductase catalytic subunit MsrP (312 aa).

A signal peptide (tat-type signal) is located at residues 1–45 (MPVYRPPRIAASEITPERFFLDRRSFLAAAGGLVLGGTGMAHAAA). Mo-molybdopterin contacts are provided by residues Asn-69, 72 to 73 (YE), Cys-126, Thr-161, Asn-211, Arg-216, and 227 to 229 (GIK).

This sequence belongs to the MsrP family. As to quaternary structure, heterodimer of a catalytic subunit (MsrP) and a heme-binding subunit (MsrQ). It depends on Mo-molybdopterin as a cofactor. In terms of processing, predicted to be exported by the Tat system. The position of the signal peptide cleavage has not been experimentally proven.

It localises to the periplasm. It carries out the reaction L-methionyl-[protein] + a quinone + H2O = L-methionyl-(S)-S-oxide-[protein] + a quinol. It catalyses the reaction L-methionyl-[protein] + a quinone + H2O = L-methionyl-(R)-S-oxide-[protein] + a quinol. Its function is as follows. Part of the MsrPQ system that repairs oxidized periplasmic proteins containing methionine sulfoxide residues (Met-O), using respiratory chain electrons. Thus protects these proteins from oxidative-stress damage caused by reactive species of oxygen and chlorine generated by the host defense mechanisms. MsrPQ is essential for the maintenance of envelope integrity under bleach stress, rescuing a wide series of structurally unrelated periplasmic proteins from methionine oxidation. The catalytic subunit MsrP is non-stereospecific, being able to reduce both (R-) and (S-) diastereoisomers of methionine sulfoxide. The polypeptide is Protein-methionine-sulfoxide reductase catalytic subunit MsrP (Sinorhizobium fredii (strain NBRC 101917 / NGR234)).